A 451-amino-acid chain; its full sequence is Probable D-serine dehydratase (451 aa).

Residue K119 is modified to N6-(pyridoxal phosphate)lysine.

Belongs to the serine/threonine dehydratase family. DsdA subfamily. Requires pyridoxal 5'-phosphate as cofactor.

It carries out the reaction D-serine = pyruvate + NH4(+). This Acidovorax ebreus (strain TPSY) (Diaphorobacter sp. (strain TPSY)) protein is Probable D-serine dehydratase.